A 589-amino-acid polypeptide reads, in one-letter code: Guanylate-binding protein 2 (589 aa).

The segment at 1–309 (MASEIHMSEP…GAISNGSLPC (309 aa)) is GTPase domain (Globular). Positions 35–276 (TQPVVVVAIV…FTSYILSYSS (242 aa)) constitute a GB1/RHD3-type G domain. Residues 45–52 (GLYRTGKS), 181–182 (RD), and leucine 245 contribute to the GTP site. The residue at position 586 (cysteine 586) is a Cysteine methyl ester. Cysteine 586 is lipidated: S-geranylgeranyl cysteine. The propeptide at 587–589 (TIL) is removed in mature form.

This sequence belongs to the TRAFAC class dynamin-like GTPase superfamily. GB1/RHD3 GTPase family. GB1 subfamily. In terms of assembly, homodimer; homodimerization occurs upon GTP-binding and is required for the association with membranous structures. Heterodimer with other family members, including GBP1, GBP3, GBP4 and GBP5. Post-translationally, isoprenylation is required for proper subcellular location.

It is found in the cytoplasmic vesicle membrane. It localises to the golgi apparatus membrane. The protein resides in the cytoplasm. The protein localises to the perinuclear region. The catalysed reaction is GTP + H2O = GDP + phosphate + H(+). Interferon (IFN)-inducible GTPase that plays important roles in innate immunity against a diverse range of bacterial, viral and protozoan pathogens. Hydrolyzes GTP to GMP in 2 consecutive cleavage reactions, but the major reaction product is GDP. Following infection, recruited to the pathogen-containing vacuoles or vacuole-escaped bacteria and acts as a positive regulator of inflammasome assembly by promoting the release of inflammasome ligands from bacteria. Acts by promoting lysis of pathogen-containing vacuoles, releasing pathogens into the cytosol. Following pathogen release in the cytosol, promotes recruitment of proteins that mediate bacterial cytolysis, such as Gm12250/Irgb10: this liberates ligands that are detected by inflammasomes, such as lipopolysaccharide (LPS) that activates the non-canonical CASP4/CASP11 inflammasome or double-stranded DNA (dsDNA) that activates the AIM2 inflammasome. Confers protection to the protozoan pathogen Toxoplasma gondii. Independently of its GTPase activity, acts as an inhibitor of various viruses infectivity by inhibiting FURIN-mediated maturation of viral envelope proteins. The polypeptide is Guanylate-binding protein 2 (Mus musculus (Mouse)).